A 272-amino-acid chain; its full sequence is 2-dehydro-3-deoxyphosphooctonate aldolase (272 aa).

Belongs to the KdsA family.

The protein localises to the cytoplasm. It catalyses the reaction D-arabinose 5-phosphate + phosphoenolpyruvate + H2O = 3-deoxy-alpha-D-manno-2-octulosonate-8-phosphate + phosphate. Its pathway is carbohydrate biosynthesis; 3-deoxy-D-manno-octulosonate biosynthesis; 3-deoxy-D-manno-octulosonate from D-ribulose 5-phosphate: step 2/3. It functions in the pathway bacterial outer membrane biogenesis; lipopolysaccharide biosynthesis. The protein is 2-dehydro-3-deoxyphosphooctonate aldolase of Geobacter sulfurreducens (strain ATCC 51573 / DSM 12127 / PCA).